Consider the following 32-residue polypeptide: Cytochrome b6-f complex subunit 7 (32 aa).

Residues 9-27 (AAVFWILIPIGLVGGALLL) traverse the membrane as a helical segment.

The protein belongs to the PetM family. In terms of assembly, the 4 large subunits of the cytochrome b6-f complex are cytochrome b6, subunit IV (17 kDa polypeptide, PetD), cytochrome f and the Rieske protein, while the 4 small subunits are PetG, PetL, PetM and PetN. The complex functions as a dimer.

It localises to the cellular thylakoid membrane. Functionally, component of the cytochrome b6-f complex, which mediates electron transfer between photosystem II (PSII) and photosystem I (PSI), cyclic electron flow around PSI, and state transitions. The sequence is that of Cytochrome b6-f complex subunit 7 from Prochlorococcus marinus (strain MIT 9515).